The primary structure comprises 253 residues: Ribonuclease 3 (253 aa).

Residues 29–157 (VDELQKTIGH…MLGAVFLDAG (129 aa)) form the RNase III domain. A Mg(2+)-binding site is contributed by E70. D74 is an active-site residue. D143 and E146 together coordinate Mg(2+). Residue E146 is part of the active site. The DRBM domain occupies 184–253 (DYKSQLQELT…AARAVATLDK (70 aa)).

This sequence belongs to the ribonuclease III family. As to quaternary structure, homodimer. It depends on Mg(2+) as a cofactor.

It localises to the cytoplasm. The catalysed reaction is Endonucleolytic cleavage to 5'-phosphomonoester.. Digests double-stranded RNA. Involved in the processing of primary rRNA transcript to yield the immediate precursors to the large and small rRNAs (23S and 16S). Processes some mRNAs, and tRNAs when they are encoded in the rRNA operon. Processes pre-crRNA and tracrRNA of type II CRISPR loci if present in the organism. In Nitratidesulfovibrio vulgaris (strain ATCC 29579 / DSM 644 / CCUG 34227 / NCIMB 8303 / VKM B-1760 / Hildenborough) (Desulfovibrio vulgaris), this protein is Ribonuclease 3.